Here is a 493-residue protein sequence, read N- to C-terminus: Chromosomal replication initiator protein DnaA (493 aa).

The tract at residues 1-105 (MSDTIQQEAP…LMYSIVIDKS (105 aa)) is domain I, interacts with DnaA modulators. Positions 105-152 (SQGQPVTIELPHQIDAAPAERSVRPEAPGQKASAERERLEIARPRFES) are domain II. The disordered stretch occupies residues 121 to 140 (APAERSVRPEAPGQKASAER). Residues 153-370 (NLNPKYTFST…GCIVKLLAAH (218 aa)) are domain III, AAA+ region. Residues glycine 198, glycine 200, lysine 201, and threonine 202 each contribute to the ATP site. The domain IV, binds dsDNA stretch occupies residues 371–493 (SLDNQEIDLQ…LRKRIEIMSM (123 aa)).

Belongs to the DnaA family. Oligomerizes as a right-handed, spiral filament on DNA at oriC.

Its subcellular location is the cytoplasm. In terms of biological role, plays an essential role in the initiation and regulation of chromosomal replication. ATP-DnaA binds to the origin of replication (oriC) to initiate formation of the DNA replication initiation complex once per cell cycle. Binds the DnaA box (a 9 base pair repeat at the origin) and separates the double-stranded (ds)DNA. Forms a right-handed helical filament on oriC DNA; dsDNA binds to the exterior of the filament while single-stranded (ss)DNA is stabiized in the filament's interior. The ATP-DnaA-oriC complex binds and stabilizes one strand of the AT-rich DNA unwinding element (DUE), permitting loading of DNA polymerase. After initiation quickly degrades to an ADP-DnaA complex that is not apt for DNA replication. Binds acidic phospholipids. The protein is Chromosomal replication initiator protein DnaA of Chlorobaculum tepidum (strain ATCC 49652 / DSM 12025 / NBRC 103806 / TLS) (Chlorobium tepidum).